The chain runs to 909 residues: Ribosome-releasing factor 2, mitochondrial (909 aa).

The N-terminal 15 residues, 1 to 15 (MVAAPLLRAHQAARL), are a transit peptide targeting the mitochondrion. One can recognise a tr-type G domain in the interval 57–367 (DRTRNIGIIA…AVTNLLPSPP (311 aa)). Residue 66–73 (AHIDAGKT) participates in GTP binding. Positions 121–148 (WPPQTAGDGNTTPQEPQTPRSASSHTVN) are disordered. Positions 127–148 (GDGNTTPQEPQTPRSASSHTVN) are enriched in polar residues. GTP contacts are provided by residues 151-155 (DTPGH) and 205-208 (NKLD).

The protein belongs to the TRAFAC class translation factor GTPase superfamily. Classic translation factor GTPase family. EF-G/EF-2 subfamily.

It localises to the mitochondrion. Mitochondrial GTPase that mediates the disassembly of ribosomes from messenger RNA at the termination of mitochondrial protein biosynthesis. Not involved in the GTP-dependent ribosomal translocation step during translation elongation. The polypeptide is Ribosome-releasing factor 2, mitochondrial (mef2) (Aspergillus flavus (strain ATCC 200026 / FGSC A1120 / IAM 13836 / NRRL 3357 / JCM 12722 / SRRC 167)).